The following is a 220-amino-acid chain: DNA mismatch repair protein MutH (220 aa).

This sequence belongs to the MutH family.

It localises to the cytoplasm. Its function is as follows. Sequence-specific endonuclease that cleaves unmethylated GATC sequences. It is involved in DNA mismatch repair. The protein is DNA mismatch repair protein MutH of Buchnera aphidicola subsp. Baizongia pistaciae (strain Bp).